The following is an 877-amino-acid chain: Alanine--tRNA ligase (877 aa).

Positions 567, 571, 669, and 673 each coordinate Zn(2+).

It belongs to the class-II aminoacyl-tRNA synthetase family. It depends on Zn(2+) as a cofactor.

Its subcellular location is the cytoplasm. The enzyme catalyses tRNA(Ala) + L-alanine + ATP = L-alanyl-tRNA(Ala) + AMP + diphosphate. Its function is as follows. Catalyzes the attachment of alanine to tRNA(Ala) in a two-step reaction: alanine is first activated by ATP to form Ala-AMP and then transferred to the acceptor end of tRNA(Ala). Also edits incorrectly charged Ser-tRNA(Ala) and Gly-tRNA(Ala) via its editing domain. The chain is Alanine--tRNA ligase from Rickettsia bellii (strain RML369-C).